A 652-amino-acid polypeptide reads, in one-letter code: Sodium-dependent nutrient amino acid transporter 1 (652 aa).

Residues 1-54 form a disordered region; the sequence is MELKGVHQQNGTSNGTGAVGAEGESAPPTAPATAEAAASLETTTEKVDAEQQKP. Topologically, residues 1–58 are cytoplasmic; the sequence is MELKGVHQQNGTSNGTGAVGAEGESAPPTAPATAEAAASLETTTEKVDAEQQKPERTN. Polar residues predominate over residues 7–16; sequence HQQNGTSNGT. The span at 21 to 42 shows a compositional bias: low complexity; sequence AEGESAPPTAPATAEAAASLET. A compositionally biased stretch (basic and acidic residues) spans 43-54; that stretch reads TTEKVDAEQQKP. The next 4 helical transmembrane spans lie at 59 to 79, 92 to 112, 130 to 150, and 155 to 175; these read WGNGLEFLMSCISVSVGLGNV, GAFLIPYIIVLFLIGKPMYYL, VVPGFVGVGYGQAFATICIIT, and LLALTLYYLFVSFQSVLPWSY. Residues asparagine 201 and asparagine 204 are each glycosylated (N-linked (GlcNAc...) asparagine). 9 helical membrane-spanning segments follow: residues 240-260, 269-289, 318-338, 352-372, 412-432, 458-478, 485-505, 527-547, and 564-584; these read PDWKLTLALFVSWVVIFLVIM, AAYFLALFPYVVLFILLVRAV, AVVQCFFSLAVGSGPIIMFAS, IVTTLDTLTSLLGGITIFAIL, LFSVLFFFMLFVLGIGSIVAL, ICGFLMGLVYVTPGGQWILTL, TYVVFILAIFELAGIVWIYGM, CWSFFTPVMMIVIFIYSMVTI, and AGWLLFGIGAAQFPLWWMWYI.

Belongs to the sodium:neurotransmitter symporter (SNF) (TC 2.A.22) family.

It localises to the membrane. In terms of biological role, unusual broad substrate spectrum amino acid:sodium cotransporter that promotes absorption of the D isomers of essential amino acids. Neutral amino acids are the preferred substrates, especially methionine and phenylalanine. This is Sodium-dependent nutrient amino acid transporter 1 from Drosophila persimilis (Fruit fly).